The sequence spans 95 residues: Aspartyl/glutamyl-tRNA(Asn/Gln) amidotransferase subunit C (95 aa).

Belongs to the GatC family. In terms of assembly, heterotrimer of A, B and C subunits.

It carries out the reaction L-glutamyl-tRNA(Gln) + L-glutamine + ATP + H2O = L-glutaminyl-tRNA(Gln) + L-glutamate + ADP + phosphate + H(+). The enzyme catalyses L-aspartyl-tRNA(Asn) + L-glutamine + ATP + H2O = L-asparaginyl-tRNA(Asn) + L-glutamate + ADP + phosphate + 2 H(+). Its function is as follows. Allows the formation of correctly charged Asn-tRNA(Asn) or Gln-tRNA(Gln) through the transamidation of misacylated Asp-tRNA(Asn) or Glu-tRNA(Gln) in organisms which lack either or both of asparaginyl-tRNA or glutaminyl-tRNA synthetases. The reaction takes place in the presence of glutamine and ATP through an activated phospho-Asp-tRNA(Asn) or phospho-Glu-tRNA(Gln). In Methylobacillus flagellatus (strain ATCC 51484 / DSM 6875 / VKM B-1610 / KT), this protein is Aspartyl/glutamyl-tRNA(Asn/Gln) amidotransferase subunit C.